Here is a 114-residue protein sequence, read N- to C-terminus: Cuticle protein AMP5 (114 aa).

The residue at position 1 (glutamine 1) is a Pyrrolidone carboxylic acid. The region spanning 18–83 (AGNYFYEFET…VDSPLIPVAP (66 aa)) is the Chitin-binding type R&amp;R domain.

As to expression, arthrodial membrane.

The chain is Cuticle protein AMP5 from Homarus americanus (American lobster).